Here is a 163-residue protein sequence, read N- to C-terminus: Nucleotide-binding protein SYNPCC7002_A1983 (163 aa).

The protein belongs to the YajQ family.

In terms of biological role, nucleotide-binding protein. In Picosynechococcus sp. (strain ATCC 27264 / PCC 7002 / PR-6) (Agmenellum quadruplicatum), this protein is Nucleotide-binding protein SYNPCC7002_A1983.